We begin with the raw amino-acid sequence, 211 residues long: Arginine exporter protein ArgO (211 aa).

Transmembrane regions (helical) follow at residues 1 to 21, 37 to 57, 68 to 88, 111 to 131, 147 to 167, and 179 to 199; these read MISY…PLGP, LMIA…GIFG, LLAL…LGAL, IIAT…DTFV, WFAL…ALLA, and AQRI…FQLA.

The protein belongs to the LysE/ArgO transporter (TC 2.A.75) family.

It is found in the cell inner membrane. It carries out the reaction L-arginine(in) = L-arginine(out). Its function is as follows. Involved in the export of arginine. Important to control the intracellular level of arginine and the correct balance between arginine and lysine. This is Arginine exporter protein ArgO from Salmonella enteritidis PT4 (strain P125109).